A 248-amino-acid chain; its full sequence is MKVNLGNCFCLSLSQKKFPLPLASLLVNVPLALMVALGMNLALERPGVTGEMVVLESPIAPEAIFAQGVKAGEAGNYAEAVELFSVVLNLSPDSPETHYNRGLAWERLGNVDQAIADYGRSIALDRYYIPPYINRGNLYSQQQDHHTAIQDFTQAITYDPNRYKAYYNRANSYFQLGQYAQAIADYNRVLVLRPDYINAIYNRGLAHFQAGQLDSSRQDLLFSAQAYLNRGDRRSYLEALDQMSELGL.

4 TPR repeats span residues 61–94 (PEAI…SPDS), 95–128 (PETH…DRYY), 129–162 (IPPY…DPNR), and 163–196 (YKAY…RPDY).

This chain is TPR repeat-containing protein slr0751, found in Synechocystis sp. (strain ATCC 27184 / PCC 6803 / Kazusa).